Consider the following 296-residue polypeptide: Phosphatidylglycerol--prolipoprotein diacylglyceryl transferase (296 aa).

Transmembrane regions (helical) follow at residues 17 to 37 (LAVR…IVVG), 59 to 79 (MMFY…VLFY), and 97 to 117 (GGMS…LFAW). An a 1,2-diacyl-sn-glycero-3-phospho-(1'-sn-glycerol)-binding site is contributed by R142. The next 2 membrane-spanning stretches (helical) occupy residues 230 to 250 (MGAI…TVEF) and 265 to 285 (LSMG…MMIW).

The protein belongs to the Lgt family.

Its subcellular location is the cell inner membrane. It carries out the reaction L-cysteinyl-[prolipoprotein] + a 1,2-diacyl-sn-glycero-3-phospho-(1'-sn-glycerol) = an S-1,2-diacyl-sn-glyceryl-L-cysteinyl-[prolipoprotein] + sn-glycerol 1-phosphate + H(+). The protein operates within protein modification; lipoprotein biosynthesis (diacylglyceryl transfer). Functionally, catalyzes the transfer of the diacylglyceryl group from phosphatidylglycerol to the sulfhydryl group of the N-terminal cysteine of a prolipoprotein, the first step in the formation of mature lipoproteins. In Burkholderia pseudomallei (strain 668), this protein is Phosphatidylglycerol--prolipoprotein diacylglyceryl transferase.